A 252-amino-acid polypeptide reads, in one-letter code: Probable 6-phosphogluconolactonase 5 (252 aa).

This sequence belongs to the glucosamine/galactosamine-6-phosphate isomerase family. 6-phosphogluconolactonase subfamily.

Its subcellular location is the cytoplasm. The protein resides in the cytosol. The enzyme catalyses 6-phospho-D-glucono-1,5-lactone + H2O = 6-phospho-D-gluconate + H(+). Its pathway is carbohydrate degradation; pentose phosphate pathway; D-ribulose 5-phosphate from D-glucose 6-phosphate (oxidative stage): step 2/3. In terms of biological role, catalyzes the hydrolysis of 6-phosphogluconolactone to 6-phosphogluconate. The chain is Probable 6-phosphogluconolactonase 5 from Arabidopsis thaliana (Mouse-ear cress).